The chain runs to 204 residues: Small ribosomal subunit protein uS4 (204 aa).

In terms of domain architecture, S4 RNA-binding spans 95-157 (RRLDNTVFRM…KGIHSIIRHN (63 aa)).

This sequence belongs to the universal ribosomal protein uS4 family. In terms of assembly, part of the 30S ribosomal subunit. Contacts protein S5. The interaction surface between S4 and S5 is involved in control of translational fidelity.

In terms of biological role, one of the primary rRNA binding proteins, it binds directly to 16S rRNA where it nucleates assembly of the body of the 30S subunit. Functionally, with S5 and S12 plays an important role in translational accuracy. This is Small ribosomal subunit protein uS4 from Treponema pallidum (strain Nichols).